A 305-amino-acid chain; its full sequence is tRNA pseudouridine synthase B (305 aa).

D41 acts as the Nucleophile in catalysis.

It belongs to the pseudouridine synthase TruB family. Type 1 subfamily.

The enzyme catalyses uridine(55) in tRNA = pseudouridine(55) in tRNA. Its function is as follows. Responsible for synthesis of pseudouridine from uracil-55 in the psi GC loop of transfer RNAs. The protein is tRNA pseudouridine synthase B of Prochlorococcus marinus (strain MIT 9301).